The following is a 198-amino-acid chain: Glycerol-3-phosphate acyltransferase (198 aa).

5 helical membrane-spanning segments follow: residues 6 to 26, 55 to 75, 83 to 103, 113 to 133, and 154 to 174; these read FLPVALIIGYLFGSIPFGLIL, GLAAGTLLGDALKGTAAVIIS, AAMIAGLGAFLGHLFPVWLKF, IGILIGLFWPGAIFFCLVWLA, and IVLWAFGHTALAALFALLTLL.

Belongs to the PlsY family. As to quaternary structure, probably interacts with PlsX.

Its subcellular location is the cell inner membrane. The enzyme catalyses an acyl phosphate + sn-glycerol 3-phosphate = a 1-acyl-sn-glycero-3-phosphate + phosphate. It functions in the pathway lipid metabolism; phospholipid metabolism. Functionally, catalyzes the transfer of an acyl group from acyl-phosphate (acyl-PO(4)) to glycerol-3-phosphate (G3P) to form lysophosphatidic acid (LPA). This enzyme utilizes acyl-phosphate as fatty acyl donor, but not acyl-CoA or acyl-ACP. This chain is Glycerol-3-phosphate acyltransferase, found in Bradyrhizobium sp. (strain BTAi1 / ATCC BAA-1182).